We begin with the raw amino-acid sequence, 613 residues long: Zinc metalloproteinase-disintegrin-like MTP8 (613 aa).

Positions 1–20 (MIEVLLVTICFTVFPYQGSP) are cleaved as a signal peptide. Positions 21–191 (IILESGNVND…DETIEKISQL (171 aa)) are excised as a propeptide. The region spanning 205-401 (KYIELYVVVD…VRPQCILNKP (197 aa)) is the Peptidase M12B domain. Glu208 serves as a coordination point for Ca(2+). N-linked (GlcNAc...) asparagine glycosylation occurs at Asn282. Position 292 (Asp292) interacts with Ca(2+). Intrachain disulfides connect Cys316–Cys396, Cys356–Cys380, and Cys358–Cys363. Zn(2+) contacts are provided by His341, His345, and His351. Residues Cys396, Asn399, Asn414, Phe416, Glu418, Glu421, and Asp424 each contribute to the Ca(2+) site. One can recognise a Disintegrin domain in the interval 409 to 495 (PPVCGNYFVE…KCPTDSFQRN (87 aa)). Disulfide bonds link Cys412–Cys441, Cys423–Cys436, Cys425–Cys431, Cys435–Cys458, Cys449–Cys455, Cys454–Cys480, Cys467–Cys487, Cys474–Cys506, Cys499–Cys511, Cys518–Cys568, Cys533–Cys575, Cys543–Cys577, Cys546–Cys556, Cys563–Cys601, and Cys595–Cys606. N-linked (GlcNAc...) asparagine glycosylation occurs at Asn437. The short motif at 473 to 475 (DCD) is the D/ECD-tripeptide element. Ca(2+) contacts are provided by Asp475, Leu476, Glu478, and Asp490. N-linked (GlcNAc...) asparagine glycans are attached at residues Asn550 and Asn572.

The protein belongs to the venom metalloproteinase (M12B) family. P-III subfamily. As to quaternary structure, monomer. Zn(2+) serves as cofactor. In terms of tissue distribution, expressed by the venom gland.

It is found in the secreted. Functionally, snake venom zinc metalloproteinase that may impair hemostasis in the prey. The protein is Zinc metalloproteinase-disintegrin-like MTP8 of Drysdalia coronoides (White-lipped snake).